The primary structure comprises 314 residues: Olfactory receptor 4K2 (314 aa).

Topologically, residues 1 to 25 (MDVGNKSTMSEFVLLGLSNSWELQM) are extracellular. N-linked (GlcNAc...) asparagine glycosylation occurs at N5. Residues 26–49 (FFFMVFSLLYVATMVGNSLIVITV) form a helical membrane-spanning segment. The Cytoplasmic segment spans residues 50–57 (IVDPHLHS). The chain crosses the membrane as a helical span at residues 58-79 (PMYFLLTNLSIIDMSLASFATP). Topologically, residues 80–100 (KMITDYLTGHKTISFDGCLTQ) are extracellular. C97 and C189 form a disulfide bridge. The chain crosses the membrane as a helical span at residues 101–120 (IFFLHLFTGTEIILLMAMSF). The Cytoplasmic portion of the chain corresponds to 121 to 139 (DRYIAICKPLHYASVISPQ). Residues 140-158 (VCVALVVASWIMGVMHSMS) traverse the membrane as a helical segment. The Extracellular portion of the chain corresponds to 159–195 (QVIFALTLPFCGPYEVDSFFCDLPVVFQLACVDTYVL). Residues 196–219 (GLFMISTSGIIALSCFIVLFNSYV) form a helical membrane-spanning segment. The Cytoplasmic portion of the chain corresponds to 220 to 235 (IVLVTVKHHSSRGSSK). Residues 236–258 (ALSTCTAHFIVVFLFFGPCIFIY) traverse the membrane as a helical segment. The Extracellular segment spans residues 259-269 (MWPLSSFLTDK). Residues 270–289 (ILSVFYTIFTPTLNPIIYTL) traverse the membrane as a helical segment. The Cytoplasmic segment spans residues 290-314 (RNQEVKIAMRKLKNRFLNFNKAMPS).

The protein belongs to the G-protein coupled receptor 1 family.

The protein resides in the cell membrane. In terms of biological role, odorant receptor. In Homo sapiens (Human), this protein is Olfactory receptor 4K2 (OR4K2).